The primary structure comprises 282 residues: MTSADYASRQRAIIAELNVAPHFDVDADIARRVDFLAQYLRSSGLRTYVLGISGGVDSSTAGRLAQLAVEQLRAGGYDARFIAMRLPNGVQNDEADAQRALAFVRADETFTVDVKPAADAMLASLVASGHAFETPAQQDFVHGNIKARERMIAQYAVAGARRGIVIGTDHAAESLMGFFTKFGDGGADVLPLAGLSKRRVRAVARALGGDELIVMKVPTADLEELRPLRPDEHAYGVTYDEIDDFLEGKTVSDTVYETVLRFYDGSRHKRALPYTLFDWPTA.

51-58 (GISGGVDS) is a binding site for ATP. A Mg(2+)-binding site is contributed by Asp57. Arg148 is a binding site for deamido-NAD(+). Thr168 lines the ATP pocket. A Mg(2+)-binding site is contributed by Glu173. Deamido-NAD(+) contacts are provided by Lys181 and Asp188. Residues Lys197 and Thr219 each coordinate ATP. Residue 268–269 (HK) coordinates deamido-NAD(+).

This sequence belongs to the NAD synthetase family. As to quaternary structure, homodimer.

The catalysed reaction is deamido-NAD(+) + NH4(+) + ATP = AMP + diphosphate + NAD(+) + H(+). Its pathway is cofactor biosynthesis; NAD(+) biosynthesis; NAD(+) from deamido-NAD(+) (ammonia route): step 1/1. In terms of biological role, catalyzes the ATP-dependent amidation of deamido-NAD to form NAD. Uses ammonia as a nitrogen source. The polypeptide is NH(3)-dependent NAD(+) synthetase (Burkholderia ambifaria (strain MC40-6)).